We begin with the raw amino-acid sequence, 540 residues long: GMP synthase [glutamine-hydrolyzing] (540 aa).

The region spanning 26–216 is the Glutamine amidotransferase type-1 domain; that stretch reads IIIILDFGSQ…VYHICECEPT (191 aa). Residue cysteine 103 is the Nucleophile of the active site. Catalysis depends on residues histidine 190 and glutamate 192. A GMPS ATP-PPase domain is found at 217–415; sequence WTTAAFVEEA…VGLPEEIVQR (199 aa). 244–250 serves as a coordination point for ATP; that stretch reads SGGVDSS.

As to quaternary structure, homodimer.

The enzyme catalyses XMP + L-glutamine + ATP + H2O = GMP + L-glutamate + AMP + diphosphate + 2 H(+). The protein operates within purine metabolism; GMP biosynthesis; GMP from XMP (L-Gln route): step 1/1. Catalyzes the synthesis of GMP from XMP. This chain is GMP synthase [glutamine-hydrolyzing], found in Trichormus variabilis (strain ATCC 29413 / PCC 7937) (Anabaena variabilis).